We begin with the raw amino-acid sequence, 514 residues long: 2-isopropylmalate synthase (514 aa).

Residues 5 to 267 enclose the Pyruvate carboxyltransferase domain; it reads LVIFDTTLRD…DTRIHTPEIL (263 aa). Mn(2+)-binding residues include aspartate 14, histidine 202, histidine 204, and asparagine 238. Positions 394-514 are regulatory domain; the sequence is RLVALKVGTQ…GSKEHPQAHV (121 aa).

Belongs to the alpha-IPM synthase/homocitrate synthase family. LeuA type 1 subfamily. In terms of assembly, homodimer. Mn(2+) serves as cofactor.

It is found in the cytoplasm. It carries out the reaction 3-methyl-2-oxobutanoate + acetyl-CoA + H2O = (2S)-2-isopropylmalate + CoA + H(+). Its pathway is amino-acid biosynthesis; L-leucine biosynthesis; L-leucine from 3-methyl-2-oxobutanoate: step 1/4. Catalyzes the condensation of the acetyl group of acetyl-CoA with 3-methyl-2-oxobutanoate (2-ketoisovalerate) to form 3-carboxy-3-hydroxy-4-methylpentanoate (2-isopropylmalate). The chain is 2-isopropylmalate synthase from Hydrogenovibrio crunogenus (strain DSM 25203 / XCL-2) (Thiomicrospira crunogena).